The sequence spans 632 residues: 2-hydroxyacyl-CoA lyase 2 (632 aa).

A helical membrane pass occupies residues 10–30 (AWGFFSSFLLLAFGTLVAALL). A thiamine diphosphate-binding site is contributed by Glu-98. A thiamine pyrophosphate binding region spans residues 470–550 (DFVGTAAYLV…VMALIGNDAG (81 aa)). Mg(2+) is bound by residues Asp-521 and Asn-547.

It belongs to the TPP enzyme family. The cofactor is Mg(2+). Thiamine diphosphate serves as cofactor.

It localises to the endoplasmic reticulum membrane. It carries out the reaction 2-hydroxyoctadecanoyl-CoA = heptadecanal + formyl-CoA. The catalysed reaction is (2R)-hydroxyhexadecanoyl-CoA = pentadecanal + formyl-CoA. In terms of biological role, endoplasmic reticulum 2-OH acyl-CoA lyase involved in the cleavage (C1 removal) reaction in the fatty acid alpha-oxydation in a thiamine pyrophosphate (TPP)-dependent manner. Involved in the phytosphingosine degradation pathway. The polypeptide is 2-hydroxyacyl-CoA lyase 2 (ILVBL) (Bos taurus (Bovine)).